Here is a 1087-residue protein sequence, read N- to C-terminus: MSFDLESNSSGGSTIGRNSSIRLSSGLAPSESTVSLNEIIDLDREFELLLDKLAIEDPIKRKQMQSLPDISKRTLLEQNKADIYRTVKHKGPIESFADVKSVISSINTKHVPIDIIKTLRIHLNTADRDWIQSFLDNDGVQPILNILKRLERNKNRKRKEHSILQWECTRCIAALMKIKIGMEYIASFPQTTNLMVLCLDTPLIKAKTLVLELLAAIAVTDRGHGAVLTSMIYHKEVKKEITRYFNLVQSLKIEKNAEYLTTCMSFINCIISSPSDLPSRIEIRKAFLNLKILKYIENLRADYNEDKNLLTQLDVFEEELSTDEQLNSQQGTQIGIEDLFSQISSRVTGTPSQQELITLMTHFQRMSSSNLGLGVWTLYNALANQLEDELKIHPDLDVTLVSLLFPEVKKSSSGLFGFGSKSKSPSSSPALSSMAKTELKKDNEEKQKTIEHLLKQLNKFSGGQNTERWMIEREEKNKLIAQLMAQTKNGGGGGGGGVGGDSSLSNDEALKRENQLLRMEIENIKNNPSVLLNSGNSINGDVPNLFISSPGSTLSPSPSGEPPIPSTDFGITSSSIHTSTDKLTNSTEPILGSPPPPPPPPMSGGGGPPPPPPPPGGKSNKPAKPIIKPSVKMRNFNWITIPALKVQGTFWDKLDETSFIQSLDKVELESLFSAKAPTVKVESKQLTRKVVVTVIDMKKANNCAIMLQHFKIPNEQLKKMQIMLDEKHFSQENAIYLLQFAPTKEDIEAIKEYQGDQMQLGAAEQYMLTVMDIPKLDSRLKAFIFKQKFEGLVEDLVPDIKAIKAASLELKKSKRLSDILKFILAIGNYVNGSTTRGGAFGFKVLETLPKMRDARSNDNKLSLLHFLAKTLQDRIPEIWNIGAELPHIEHASEVSLNNIISDSSEIKRSIDLIERDFVPMINDPLFAHDKHWIHKITEFQKIAKVQYQRIEKEIDEMNKAFEEITSYFGEPKSTQPDVFFSTINNFLEDLEKAYGEYQAMIRKAELENSKMEDPEKGGLQDLSSQIRSGQLFKDRRVGDSVIAQMQNVDSLRKNLKSTSTTTPNTPPTIKIELPSQSILKPSGQLKK.

Residues 1–23 are compositionally biased toward polar residues; it reads MSFDLESNSSGGSTIGRNSSIRL. The interval 1–25 is disordered; the sequence is MSFDLESNSSGGSTIGRNSSIRLSS. One can recognise a GBD/FH3 domain in the interval 34–394; the sequence is VSLNEIIDLD…QLEDELKIHP (361 aa). 2 stretches are compositionally biased toward low complexity: residues 416 to 436 and 549 to 558; these read FGFGSKSKSPSSSPALSSMAK and SPGSTLSPSP. 3 disordered regions span residues 416–445, 549–625, and 1048–1087; these read FGFGSKSKSPSSSPALSSMAKTELKKDNEE, SPGS…PAKP, and VDSLRKNLKSTSTTTPNTPPTIKIELPSQSILKPSGQLKK. Residues 433-461 adopt a coiled-coil conformation; sequence SMAKTELKKDNEEKQKTIEHLLKQLNKFS. Positions 569–588 are enriched in polar residues; that stretch reads FGITSSSIHTSTDKLTNSTE. One can recognise an FH1 domain in the interval 589 to 615; sequence PILGSPPPPPPPPMSGGGGPPPPPPPP. Residues 592–616 show a composition bias toward pro residues; the sequence is GSPPPPPPPPMSGGGGPPPPPPPPG. Positions 623 to 1016 constitute an FH2 domain; that stretch reads AKPIIKPSVK…ENSKMEDPEK (394 aa). Positions 1013-1051 constitute a DAD domain; sequence DPEKGGLQDLSSQIRSGQLFKDRRVGDSVIAQMQNVDSL.

Belongs to the formin homology family. Diaphanous subfamily. Interacts with vasP, proB/profilin-2 and rac1A. Interacts (via GBD/FH3 domain) with activated Rho-GTPases.

The protein localises to the cytoplasm. The protein resides in the cell cortex. Its subcellular location is the cytoskeleton. Functionally, formins play an important role in the nucleation of actin and the formation of linear actin filaments. Important for cell migration and formation, elongation and maintenance of filopodia. Specifically controls filopodial dynamics by regulating actin turnover at the barbed ends of actin filaments. This chain is Formin-H (forH), found in Dictyostelium discoideum (Social amoeba).